Here is a 180-residue protein sequence, read N- to C-terminus: Dual-action ribosomal maturation protein DarP (180 aa).

The span at 1–13 (MKPDKTENTEHGI) shows a compositional bias: basic and acidic residues. The tract at residues 1 to 21 (MKPDKTENTEHGIEPVSKTKR) is disordered.

The protein belongs to the DarP family.

It localises to the cytoplasm. Functionally, member of a network of 50S ribosomal subunit biogenesis factors which assembles along the 30S-50S interface, preventing incorrect 23S rRNA structures from forming. Promotes peptidyl transferase center (PTC) maturation. The polypeptide is Dual-action ribosomal maturation protein DarP (Methylobacillus flagellatus (strain ATCC 51484 / DSM 6875 / VKM B-1610 / KT)).